The chain runs to 154 residues: Transcriptional repressor NrdR (154 aa).

A zinc finger spans residues 3-34; that stretch reads CPFCRHPDSRVVDSREADEGQAIRRRRSCPEC. The ATP-cone domain occupies 46-136; that stretch reads LAVVKRSGVT…VYRGFSSAED (91 aa).

This sequence belongs to the NrdR family. The cofactor is Zn(2+).

Its function is as follows. Negatively regulates transcription of bacterial ribonucleotide reductase nrd genes and operons by binding to NrdR-boxes. The chain is Transcriptional repressor NrdR from Mycobacteroides abscessus (strain ATCC 19977 / DSM 44196 / CCUG 20993 / CIP 104536 / JCM 13569 / NCTC 13031 / TMC 1543 / L948) (Mycobacterium abscessus).